The chain runs to 407 residues: MSKLYVGSEVGQLRRVLLNRPERALTHLTPSNCHELLFDDVLAVEAAGEEHDAFARTLREQDVEVLLLHDLLVETLAVPEAKQWLLNTQISDFRYGPTFARDLRQYLLEMDDEHLATILLGGLAYSELPIQSSSMLPKMKRPLDFVIEPLPNHLFTRDTSCWVYGGVSLNPMMMPARQRETNHLRAIYRWHPIFAGQDFIKYFGDDDLHYDNANVEGGDVLVIGKGAVLIGMSERTTPQGVENLAASLFKAGQASEVIAIDLPKHRSCMHLDTVMTHMDVDTFSVYPEIMRKDLDTWRLTPKGTDGEMHVEASHNYLHAIESALGLDQLKIITTGGDSYEAEREQWNDANNVLTVKPGVVIGYERNVYTNEKYDKAGIQVLTVPGNELGRGRGGARCMSCPIERDDI.

The active-site Amidino-cysteine intermediate is C397.

It belongs to the arginine deiminase family.

The protein localises to the cytoplasm. The catalysed reaction is L-arginine + H2O = L-citrulline + NH4(+). Its pathway is amino-acid degradation; L-arginine degradation via ADI pathway; carbamoyl phosphate from L-arginine: step 1/2. The chain is Arginine deiminase from Vibrio parahaemolyticus serotype O3:K6 (strain RIMD 2210633).